We begin with the raw amino-acid sequence, 444 residues long: Nuclear envelope integral membrane protein 1 (444 aa).

Positions 1-43 are cleaved as a signal peptide; the sequence is MAGGMKVAVSPAVGPGPWGSGVGGGGTVRLLLILSGCLVYGTA. A glycan (N-linked (GlcNAc...) asparagine) is linked at Asn125. The next 5 membrane-spanning stretches (helical) occupy residues 161–181, 186–206, 216–236, 245–265, and 289–309; these read PKLF…DLLS, FYYS…IIFI, PIYV…QLVF, CYWQ…FAVC, and LCFM…IIIA. Residues 186-297 are a; required for its colocalization with lamins at the nuclear envelope; it reads FYYSTGMSVG…GLCFMYSGIQ (112 aa). Positions 336 to 405 are b; required for interaction with RAN-GTP; the sequence is PVPPRLLTEE…LTPNEVSVHE (70 aa). Positions 336 to 444 are required for nuclear localization; the sequence is PVPPRLLTEE…PAITQNNFLT (109 aa). Phosphoserine is present on residues Ser368, Ser424, and Ser425.

Belongs to the NEMP family. Homooligomer. Interacts with RAN-GTP. Interacts with EMD. Phosphorylation may regulate its interaction with RAN-GTP.

The protein localises to the nucleus inner membrane. It is found in the nucleus envelope. Its function is as follows. Together with EMD, contributes to nuclear envelope stiffness in germ cells. Required for female fertility. Essential for normal erythropoiesis. Required for efficient nuclear envelope opening and enucleation during the late stages of erythroblast maturation. The protein is Nuclear envelope integral membrane protein 1 (NEMP1) of Pongo abelii (Sumatran orangutan).